A 246-amino-acid polypeptide reads, in one-letter code: Uridylate kinase (246 aa).

ATP is bound at residue 18 to 21 (KLSG). Position 60 (G60) interacts with UMP. ATP-binding residues include G61 and R65. UMP is bound by residues D80 and 141-148 (TGNPFFTT). Positions 168, 174, and 177 each coordinate ATP.

Belongs to the UMP kinase family. In terms of assembly, homohexamer.

The protein resides in the cytoplasm. The catalysed reaction is UMP + ATP = UDP + ADP. It functions in the pathway pyrimidine metabolism; CTP biosynthesis via de novo pathway; UDP from UMP (UMPK route): step 1/1. Inhibited by UTP. Its function is as follows. Catalyzes the reversible phosphorylation of UMP to UDP. The protein is Uridylate kinase of Pseudomonas syringae pv. syringae (strain B728a).